The primary structure comprises 320 residues: SPX domain-containing protein 4 (320 aa).

Residues 1 to 170 (MKFGKDFRSH…GGLLSLPFTQ (170 aa)) form the SPX domain. Disordered regions lie at residues 209 to 233 (SSSAKLQPQNDDAASHDPASSVDVE) and 275 to 320 (CSGA…PRDE). Polar residues predominate over residues 278 to 289 (AITSESDSYSDS). Positions 290–299 (QIEDAEDDDK) are enriched in acidic residues. Over residues 304–313 (REQNTAQNAA) the composition is skewed to polar residues.

Homodimer. Interacts (via N-terminus) with PHR2 (via C-terminus) in the presence of inositol polyphosphate. Interacts with BHLH6. In terms of processing, degraded under Pi starvation conditions through the ubiquitin/26S proteasome pathway. As to expression, widely expressed. Detected in root cells, with the exception of epidermis, and in mesophyll and vascular bundles in leaves.

It is found in the membrane. The protein resides in the nucleus. The protein localises to the cytoplasm. Functionally, inositol polyphosphate sensor that associates with transcription factors to regulate Pi starvation responses. The SPX domain provides a basic binding surface for inositol polyphosphate signaling molecules. Interacts with PHR2 to inhibit its translocation to the nucleus and repress its DNA-binding activity, and then negatively regulate Pi signaling. This Oryza sativa subsp. japonica (Rice) protein is SPX domain-containing protein 4.